The sequence spans 380 residues: Alpha-glucoside transport system permease protein AglG (380 aa).

The next 6 helical transmembrane spans lie at 13–33, 179–199, 202–222, 239–259, 288–308, and 344–364; these read VHLS…GLLI, VIPI…PFPG, VLLA…LIPL, TYMG…IYLL, IILP…FLWT, and EILT…FFAL. Positions 167–364 constitute an ABC transmembrane type-1 domain; it reads FLNSLTVAVP…VVPLIVFFAL (198 aa).

The protein belongs to the binding-protein-dependent transport system permease family. MalFG subfamily.

It localises to the cell inner membrane. Part of the binding-protein-dependent transport system for alpha-glucosides such as sucrose, maltose and trehalose. Probably responsible for the translocation of the substrate across the membrane. This Rhizobium meliloti (strain 1021) (Ensifer meliloti) protein is Alpha-glucoside transport system permease protein AglG (aglG).